We begin with the raw amino-acid sequence, 357 residues long: Peptide chain release factor 1 (357 aa).

At Gln234 the chain carries N5-methylglutamine.

This sequence belongs to the prokaryotic/mitochondrial release factor family. In terms of processing, methylated by PrmC. Methylation increases the termination efficiency of RF1.

The protein resides in the cytoplasm. Functionally, peptide chain release factor 1 directs the termination of translation in response to the peptide chain termination codons UAG and UAA. The sequence is that of Peptide chain release factor 1 (prfA) from Lactococcus lactis subsp. lactis (strain IL1403) (Streptococcus lactis).